The following is a 332-amino-acid chain: T-cell surface glycoprotein CD1c3 (332 aa).

The signal sequence occupies residues 1 to 17 (MLFLQFLFLDVVLGGSI). The Extracellular segment spans residues 18-300 (TKNVVQENIS…IILYWGHGLS (283 aa)). N-linked (GlcNAc...) asparagine glycans are attached at residues Asn-25, Asn-38, Asn-75, and Asn-146. 2 cysteine pairs are disulfide-bonded: Cys-120/Cys-184 and Cys-224/Cys-279. The 88-residue stretch at 205-292 (PEVWLSSSPN…HSSLRDQDII (88 aa)) folds into the Ig-like domain. A helical membrane pass occupies residues 301-321 (VILITFAVIVPLVLLIILVLL). The Cytoplasmic portion of the chain corresponds to 322–332 (CKKCCTYQGIP).

Heterodimer with B2M (beta-2-microglobulin).

It is found in the cell membrane. The protein resides in the endosome membrane. Its function is as follows. Antigen-presenting protein that binds self and non-self lipid and glycolipid antigens and presents them to T-cell receptors on natural killer T-cells. The sequence is that of T-cell surface glycoprotein CD1c3 (CD1C3) from Cavia porcellus (Guinea pig).